A 368-amino-acid polypeptide reads, in one-letter code: Histidinol-phosphate aminotransferase (368 aa).

Lys229 carries the N6-(pyridoxal phosphate)lysine modification.

The protein belongs to the class-II pyridoxal-phosphate-dependent aminotransferase family. Histidinol-phosphate aminotransferase subfamily. Homodimer. The cofactor is pyridoxal 5'-phosphate.

It carries out the reaction L-histidinol phosphate + 2-oxoglutarate = 3-(imidazol-4-yl)-2-oxopropyl phosphate + L-glutamate. It participates in amino-acid biosynthesis; L-histidine biosynthesis; L-histidine from 5-phospho-alpha-D-ribose 1-diphosphate: step 7/9. This is Histidinol-phosphate aminotransferase from Acidovorax sp. (strain JS42).